A 211-amino-acid polypeptide reads, in one-letter code: Thymidylate kinase (211 aa).

10–17 (GVEGCGKT) lines the ATP pocket.

The protein belongs to the thymidylate kinase family.

It carries out the reaction dTMP + ATP = dTDP + ADP. Its function is as follows. Phosphorylation of dTMP to form dTDP in both de novo and salvage pathways of dTTP synthesis. This is Thymidylate kinase from Nostoc sp. (strain PCC 7120 / SAG 25.82 / UTEX 2576).